Here is a 383-residue protein sequence, read N- to C-terminus: Probable indole-3-pyruvate monooxygenase YUCCA10 (383 aa).

Glycine 9–glycine 14 provides a ligand contact to FAD. Glycine 177–glycine 182 contacts NADP(+).

The protein belongs to the FMO family. The cofactor is FAD.

It carries out the reaction indole-3-pyruvate + NADPH + O2 + H(+) = (indol-3-yl)acetate + CO2 + NADP(+) + H2O. The protein operates within plant hormone metabolism; auxin biosynthesis. Its function is as follows. Involved in auxin biosynthesis. This Arabidopsis thaliana (Mouse-ear cress) protein is Probable indole-3-pyruvate monooxygenase YUCCA10 (YUC10).